The following is a 113-amino-acid chain: U-scoloptoxin(16)-Sa1a (113 aa).

The signal sequence occupies residues 1–29 (MAPPSNPLFVVLCWALFAYLMLVLRDIQA).

It belongs to the scoloptoxin-16 family. Contains 4 disulfide bonds. As to expression, expressed by the venom gland.

Its subcellular location is the secreted. This chain is U-scoloptoxin(16)-Sa1a, found in Scolopendra alternans (Florida Keys giant centipede).